The chain runs to 485 residues: Putative ATP-dependent RNA helicase ste13 (485 aa).

Residues 16–38 (DRESFKGQMKAQPVDMRPKTEDV) form a disordered region. The Q motif motif lies at 44-72 (TEFEDYYLKRELLMGIFEAGFERPSPIQE). Residues 75-245 (IPIALSGRDI…DKHLNKPYEI (171 aa)) form the Helicase ATP-binding domain. Residue 88 to 95 (AKNGTGKT) coordinates ATP. Positions 193–196 (DEAD) match the DEAD box motif. One can recognise a Helicase C-terminal domain in the interval 255-415 (GVTQYYAFVD…PIPPSIDPSL (161 aa)). The segment at 437–485 (LAAQQAKGQEGYHNRPNNNRGGHPRGGGNRGGYRQSNRQPRYRGQQKAD) is disordered.

It belongs to the DEAD box helicase family. DDX6/DHH1 subfamily.

The protein resides in the cytoplasm. The protein localises to the P-body. It carries out the reaction ATP + H2O = ADP + phosphate + H(+). In terms of biological role, ATP-dependent RNA helicase involved in mRNA turnover, and more specifically in mRNA decapping. Is involved in G1/S DNA-damage checkpoint recovery, probably through the regulation of the translational status of a subset of mRNAs. May also have a role in translation and mRNA nuclear export. The polypeptide is Putative ATP-dependent RNA helicase ste13 (ste13) (Schizosaccharomyces pombe (strain 972 / ATCC 24843) (Fission yeast)).